Reading from the N-terminus, the 221-residue chain is ATP-dependent Clp protease proteolytic subunit 3 (221 aa).

Residue Ser-118 is the Nucleophile of the active site. His-143 is a catalytic residue.

The protein belongs to the peptidase S14 family. Fourteen ClpP subunits assemble into 2 heptameric rings which stack back to back to give a disk-like structure with a central cavity, resembling the structure of eukaryotic proteasomes.

The protein localises to the cytoplasm. The catalysed reaction is Hydrolysis of proteins to small peptides in the presence of ATP and magnesium. alpha-casein is the usual test substrate. In the absence of ATP, only oligopeptides shorter than five residues are hydrolyzed (such as succinyl-Leu-Tyr-|-NHMec, and Leu-Tyr-Leu-|-Tyr-Trp, in which cleavage of the -Tyr-|-Leu- and -Tyr-|-Trp bonds also occurs).. In terms of biological role, cleaves peptides in various proteins in a process that requires ATP hydrolysis. Has a chymotrypsin-like activity. Plays a major role in the degradation of misfolded proteins. This Nocardia farcinica (strain IFM 10152) protein is ATP-dependent Clp protease proteolytic subunit 3.